A 212-amino-acid polypeptide reads, in one-letter code: Acyl-homoserine-lactone synthase (212 aa).

The protein belongs to the autoinducer synthase family.

The catalysed reaction is a fatty acyl-[ACP] + S-adenosyl-L-methionine = an N-acyl-L-homoserine lactone + S-methyl-5'-thioadenosine + holo-[ACP] + H(+). Its function is as follows. Required for the synthesis of OHHL (N-(3-oxohexanoyl)-L-homoserine lactone), an autoinducer molecule which binds to TraR and thus acts in the control of conjugal transfer. This chain is Acyl-homoserine-lactone synthase (traI), found in Rhizobium radiobacter (Agrobacterium tumefaciens).